Here is a 411-residue protein sequence, read N- to C-terminus: Allantoate amidohydrolase (411 aa).

The Zn(2+) site is built by His81, Asp92, Glu127, and His190. 3 residues coordinate allantoate: Arg215, Asn275, and Arg288. His382 contacts Zn(2+).

It belongs to the peptidase M20 family. As to quaternary structure, homodimer. It depends on Zn(2+) as a cofactor.

The protein localises to the cytoplasm. It carries out the reaction allantoate + H2O + 2 H(+) = (S)-2-ureidoglycine + NH4(+) + CO2. The protein operates within nitrogen metabolism; (S)-allantoin degradation. Sulfate could be an allosteric effector of the enzyme that is responsible for stabilizing substrate binding. In addition, this anion effector may act as a counterion during enzyme-mediated catalysis. Involved in the anaerobic nitrogen utilization via the assimilation of allantoin. Catalyzes specifically the hydrolysis of allantoate to yield CO2, NH3 and S-ureidoglycine, which is unstable and readily undergoes a second deamination by S-ureidoglycine aminohydrolase AllE to yield S-ureidoglycolate and NH3. In vivo, the spontaneous release of S-ureidoglycolate and ammonia from S-ureidoglycine appears to be too slow to sustain an efficient flux of nitrogen. The chain is Allantoate amidohydrolase from Escherichia coli (strain K12).